Reading from the N-terminus, the 528-residue chain is GMP synthase [glutamine-hydrolyzing] (528 aa).

The Glutamine amidotransferase type-1 domain occupies 13-204 (SILILDFGSQ…VYKISCCAAD (192 aa)). The active-site Nucleophile is the Cys-90. Catalysis depends on residues His-178 and Glu-180. Positions 205–403 (WTTETYIEET…LGLPAEIIKR (199 aa)) constitute a GMPS ATP-PPase domain. 232–238 (SGGVDSS) contributes to the ATP binding site.

Homodimer.

The catalysed reaction is XMP + L-glutamine + ATP + H2O = GMP + L-glutamate + AMP + diphosphate + 2 H(+). It functions in the pathway purine metabolism; GMP biosynthesis; GMP from XMP (L-Gln route): step 1/1. Catalyzes the synthesis of GMP from XMP. The protein is GMP synthase [glutamine-hydrolyzing] of Prochlorococcus marinus (strain MIT 9215).